Reading from the N-terminus, the 404-residue chain is Cytoplasmic tRNA 2-thiolation protein 2 (404 aa).

It belongs to the CTU2/NCS2 family.

It is found in the cytoplasm. Its pathway is tRNA modification; 5-methoxycarbonylmethyl-2-thiouridine-tRNA biosynthesis. Plays a central role in 2-thiolation of mcm(5)S(2)U at tRNA wobble positions of tRNA(Lys), tRNA(Glu) and tRNA(Gln). May act by forming a heterodimer with NCS6/CTU1 that ligates sulfur from thiocarboxylated URM1 onto the uridine of tRNAs at wobble position. The sequence is that of Cytoplasmic tRNA 2-thiolation protein 2 from Drosophila mojavensis (Fruit fly).